Reading from the N-terminus, the 285-residue chain is (3S)-malyl-CoA thioesterase (285 aa).

2 residues coordinate substrate: R70 and E122. Residues E122 and D148 each contribute to the Mg(2+) site.

The protein belongs to the HpcH/HpaI aldolase family. Homodimer or homotrimer. Requires Mg(2+) as cofactor.

It catalyses the reaction (S)-malyl-CoA + H2O = (S)-malate + CoA + H(+). Its function is as follows. Catalyzes the hydrolysis of (3S)-malyl-CoA to (3S)-malate and free CoA. Inactive towards beta-methylmalyl-CoA and other CoA esters. This Cereibacter sphaeroides (strain ATCC 17025 / ATH 2.4.3) (Rhodobacter sphaeroides) protein is (3S)-malyl-CoA thioesterase.